A 396-amino-acid chain; its full sequence is Phosphoglycerate kinase (396 aa).

Residues 22-24 (DFN), R37, 60-63 (HFGR), R118, and R151 contribute to the substrate site. ATP-binding positions include K201, E322, and 352–355 (GGDS).

This sequence belongs to the phosphoglycerate kinase family. Monomer.

It localises to the cytoplasm. It carries out the reaction (2R)-3-phosphoglycerate + ATP = (2R)-3-phospho-glyceroyl phosphate + ADP. Its pathway is carbohydrate degradation; glycolysis; pyruvate from D-glyceraldehyde 3-phosphate: step 2/5. The sequence is that of Phosphoglycerate kinase from Wolbachia pipientis subsp. Culex pipiens (strain wPip).